A 644-amino-acid chain; its full sequence is Protein cueball (644 aa).

Positions 1 to 26 (MIRIRFGMDVLLVLLLATCLLTPAHG) are cleaved as a signal peptide. At 27 to 531 (TPLEWDFAVT…VCLTPRVWTS (505 aa)) the chain is on the extracellular side. N82 and N108 each carry an N-linked (GlcNAc...) asparagine glycan. LDL-receptor class B repeat units lie at residues 121 to 166 (MNLF…DVCR), 167 to 211 (RKLY…DQLS), and 212 to 257 (DRLF…TNDA). N-linked (GlcNAc...) asparagine glycosylation is found at N175 and N190. The segment at 280-301 (TTTSKPEEEDSTDSTDFTDPEP) is disordered. The segment covering 286–301 (EEEDSTDSTDFTDPEP) has biased composition (acidic residues). Residue N313 is glycosylated (N-linked (GlcNAc...) asparagine). EGF-like domains lie at 398–430 (EIRE…FTGE) and 433–471 (ELSV…ARCE). 5 cysteine pairs are disulfide-bonded: C402–C411, C406–C421, C437–C447, C441–C459, and C461–C470. N473 and N508 each carry an N-linked (GlcNAc...) asparagine glycan. Residues 532–552 (SVIIILVVGIVSSLLLVAVIV) form a helical membrane-spanning segment. Residues 553–644 (HGIRRLYKPK…LIHNMEDDLY (92 aa)) are Cytoplasmic-facing.

It belongs to the cueball family.

It is found in the cell membrane. Its function is as follows. Has a role in spermatogenesis and oogenesis. This is Protein cueball from Drosophila sechellia (Fruit fly).